The following is a 1140-amino-acid chain: Protein shank (1140 aa).

6 ANK repeats span residues 144 to 174, 178 to 207, 211 to 242, 246 to 275, 279 to 309, and 312 to 341; these read QGET…HVDF, EGQT…SPNY, IGLT…DIGV, HGNH…QIDA, NGNS…HLAV, and QGQT…KSSV. The disordered stretch occupies residues 337-412; sequence PKSSVPYRGT…ITPSEYGTMR (76 aa). The span at 351–364 shows a compositional bias: basic residues; it reads TRRRLSSTITRRRS. Over residues 388 to 412 the composition is skewed to low complexity; sequence SAAPSPSPSRSSRTTITPSEYGTMR. A PDZ domain is found at 436-529; it reads ILVIPRGVKG…TITLKVITVD (94 aa). 2 stretches are compositionally biased toward polar residues: residues 640–657 and 687–704; these read DQES…NSVS and TSTF…QLSR. Disordered regions lie at residues 640 to 673, 687 to 856, 875 to 902, 961 to 993, and 1008 to 1028; these read DQES…ASSA, TSTF…AASA, QLKK…STTD, KDSG…HSPN, and YGQK…SSTV. Low complexity-rich tracts occupy residues 761-775 and 784-793; these read QHQN…QQHP and PQPIQQQQSS. Pro residues-rich tracts occupy residues 794-806 and 823-847; these read IPPP…PPHC and VPPP…PPPG. Residues 964-974 show a composition bias toward polar residues; that stretch reads GYTSSRTSLEP. A compositionally biased stretch (basic and acidic residues) spans 977 to 988; it reads SEEKDHRPHFSL. Residues 1015–1028 are compositionally biased toward low complexity; the sequence is SVASSSTASSSSTV. The SAM domain occupies 1078–1140; the sequence is WSVDDVIGWL…IESALRGLLQ (63 aa).

The protein belongs to the SHANK family. In terms of assembly, interacts (via PDZ domain) with egl-19 (via C-terminus). As to expression, expressed in the pharynx, pharyngeal-intestinal valve, intestine, rectal epithelial cells, tail neurons, nerve cord and sperm.

The protein resides in the cell projection. It localises to the pseudopodium. Its subcellular location is the cytoplasmic vesicle. It is found in the postsynaptic density. In terms of biological role, scaffold protein that most likely acts in the postsynaptic density (PSD) of excitatory synapses which orchestrates synapse formation and maintenance at neuromuscular junctions. Associates with and trafficks the L-type calcium channel egl-19 to the cell surface of body wall muscles to ensure the function of the calcium channel and therefore maintain the Ca(2+) current density. The maintenance of Ca(2+) also allows for the downstream regulation of Ca(2+)-induced expression of genes such as gem-4. Plays a role in the regulation of the defecation cycle, and this may be in association with the inositol trisphosphate (IP3) receptor itr-1, which in turn mediates periodic calcium release and muscle contractions. Required for normal fertility and pharyngeal pumping. The sequence is that of Protein shank from Caenorhabditis elegans.